Consider the following 61-residue polypeptide: Large ribosomal subunit protein uL30 (61 aa).

Belongs to the universal ribosomal protein uL30 family. As to quaternary structure, part of the 50S ribosomal subunit.

The polypeptide is Large ribosomal subunit protein uL30 (Thermosipho melanesiensis (strain DSM 12029 / CIP 104789 / BI429)).